The chain runs to 276 residues: Myoblast determination protein 1 homolog 1 (276 aa).

Positions 84-135 (DRRKAATMRERRRLSKVNDAFETLKRCTSTNPNQRLPKVDILRNAISYIESL) constitute a bHLH domain. The interval 228 to 253 (CPAVQDGSEGSSPCSPGDGSIASENG) is disordered.

As to quaternary structure, efficient DNA binding requires dimerization with another bHLH protein.

It localises to the nucleus. Functionally, may act as a transcriptional activator that promotes transcription of muscle-specific target genes and plays a role in muscle differentiation. This Oncorhynchus mykiss (Rainbow trout) protein is Myoblast determination protein 1 homolog 1 (myod1).